Here is a 359-residue protein sequence, read N- to C-terminus: Insulin gene enhancer protein isl-2a (359 aa).

2 LIM zinc-binding domains span residues cysteine 27 to aspartate 80 and cysteine 30 to histidine 143. Residues glutamate 171–lysine 190 form a disordered region. The homeobox DNA-binding region spans threonine 191–serine 250. The segment covering glutamate 326–serine 336 has biased composition (low complexity). A disordered region spans residues glutamate 326–threonine 359. Residues aspartate 337 to threonine 359 are compositionally biased toward polar residues.

It is found in the nucleus. Binds to one of the cis-acting domain of the insulin gene enhancer. May be involved in subtype specialization of primary motoneurons. This chain is Insulin gene enhancer protein isl-2a (isl2a), found in Danio rerio (Zebrafish).